Reading from the N-terminus, the 295-residue chain is MHAALSPLSQRFERIAVQPLTGVLGAEITGVDLREPLDDSTWNEILDAFHTYQVIYFPGQAITNEQHIAFSRRFGPVDPVPLLKSIEGYPEVQMIRREANESGRVIGDDWHTDSTFLDAPPAAVVMRAIDVPEHGGDTGFLSMYTAWETLSPTMQATIEGLNVVHSATRVFGSLYQAQNRRFSNTSVKVMDVDAGDRETVHPLVVTHPGSGRKGLYVNQVYCQRIEGMTDAESKPLLQFLYEHATRFDFTCRVRWKKDQVLVWDNLCTMHRAVPDYAGKFRYLTRTTVGGVRPAR.

Fe cation-binding residues include His-111 and Asp-113. Residues Thr-138 and Trp-255 each contribute to the 2-oxoglutarate site. His-270 contributes to the Fe cation binding site. Arg-281 is a binding site for 2-oxoglutarate.

Belongs to the TfdA dioxygenase family. Homotrimer. Fe cation serves as cofactor. Requires L-ascorbate as cofactor.

It catalyses the reaction (R)-2-(4-chloro-2-methylphenoxy)propanoate + 2-oxoglutarate + O2 = 2-methyl-4-chlorophenol + pyruvate + succinate + CO2. The enzyme catalyses (R)-(2,4-dichlorophenoxy)propanoate + 2-oxoglutarate + O2 = 2,4-dichlorophenol + pyruvate + succinate + CO2. Its pathway is xenobiotic degradation; 2-(2,4-dichlorophenoxy)propanoate degradation. With respect to regulation, inhibited by divalent cations, most significantly by copper and nickel, and by diethylpyrocarbonate (DEPC). Functionally, involved in the degradation of the phenoxypropionate herbicides. Catalyzes the enantiospecific cleavage of the ether bond in the herbicid R-dichlorprop ((R)-2-(2,4-dichlorophenoxy)propionate)(R-2,4-DP) and R-mecoprop ((R)-2-(4-chloro-2-methylphenoxy)propionate)(R-2,4-MCPP). It can also accept (RS)-2-(2,4,5-trichlorophenoxy)propionate, (RS)-2-(4-chlorophenoxy)propionate, (RS)-2-(m-chlorophenoxy)propionate, however it can only accept 2-oxoglutarate as oxygen acceptor. This is (R)-phenoxypropionate/alpha-ketoglutarate-dioxygenase from Delftia acidovorans (Pseudomonas acidovorans).